The chain runs to 414 residues: Gamma-glutamyl phosphate reductase (414 aa).

It belongs to the gamma-glutamyl phosphate reductase family.

Its subcellular location is the cytoplasm. It carries out the reaction L-glutamate 5-semialdehyde + phosphate + NADP(+) = L-glutamyl 5-phosphate + NADPH + H(+). Its pathway is amino-acid biosynthesis; L-proline biosynthesis; L-glutamate 5-semialdehyde from L-glutamate: step 2/2. In terms of biological role, catalyzes the NADPH-dependent reduction of L-glutamate 5-phosphate into L-glutamate 5-semialdehyde and phosphate. The product spontaneously undergoes cyclization to form 1-pyrroline-5-carboxylate. This is Gamma-glutamyl phosphate reductase from Caldanaerobacter subterraneus subsp. tengcongensis (strain DSM 15242 / JCM 11007 / NBRC 100824 / MB4) (Thermoanaerobacter tengcongensis).